Reading from the N-terminus, the 214-residue chain is Small ribosomal subunit protein uS5 (214 aa).

Positions 54–117 constitute an S5 DRBM domain; that stretch reads LKYEVVDIKV…RDAKMNILPV (64 aa).

It belongs to the universal ribosomal protein uS5 family. In terms of assembly, part of the 30S ribosomal subunit. Contacts protein S4.

Its function is as follows. With S4 and S12 plays an important role in translational accuracy. The sequence is that of Small ribosomal subunit protein uS5 from Saccharolobus islandicus (strain Y.N.15.51 / Yellowstone #2) (Sulfolobus islandicus).